The sequence spans 270 residues: MDLAHVKDNHVDLYRILHIHVNDNEHLNSVTPTLINKQFRKLSLTLHPDKSNESDLNITRDRWDNLQSAYRILSEHKKEYDIWYQRTFLHSNRELLEKLEISEKAKKEKLISYDEIEKIQRYGQTLRKLVHFEIPISDWRNPSFTENTDDLNKLTETCLFRIKLVKRKEYNNEQKLNEWFRKIDIPITVQYYSENNDQREDDLVVYASARNVQTTIEILRTIENEKELHPDILEFTPAVEFEHFSFKEKVELDPSLGSIIYNSSDNPIIM.

A J domain is found at 12 to 84 (DLYRILHIHV…EHKKEYDIWY (73 aa)).

Belongs to the DnaJ family. As to quaternary structure, associated with the spliceosome.

Its subcellular location is the cytoplasm. It localises to the nucleus. Involved in pre-mRNA splicing. May be involved in endoplasmic reticulum-associated protein degradation (ERAD) and required for growth at low and high temperatures. In Kluyveromyces lactis (strain ATCC 8585 / CBS 2359 / DSM 70799 / NBRC 1267 / NRRL Y-1140 / WM37) (Yeast), this protein is Pre-mRNA-splicing factor CWC23 (CWC23).